A 179-amino-acid chain; its full sequence is Peptide deformylase (179 aa).

Cysteine 102 and histidine 144 together coordinate Fe cation. The active site involves glutamate 145. Histidine 148 is a binding site for Fe cation.

The protein belongs to the polypeptide deformylase family. It depends on Fe(2+) as a cofactor.

The enzyme catalyses N-terminal N-formyl-L-methionyl-[peptide] + H2O = N-terminal L-methionyl-[peptide] + formate. Removes the formyl group from the N-terminal Met of newly synthesized proteins. Requires at least a dipeptide for an efficient rate of reaction. N-terminal L-methionine is a prerequisite for activity but the enzyme has broad specificity at other positions. In Wolbachia pipientis wMel, this protein is Peptide deformylase.